The chain runs to 332 residues: L-lactate dehydrogenase A chain (332 aa).

Residues Gly-29–Lys-57 and Arg-99 contribute to the NAD(+) site. Substrate is bound by residues Arg-106, Asn-138, and Arg-169. Asn-138 provides a ligand contact to NAD(+). The active-site Proton acceptor is the His-193. Thr-248 is a binding site for substrate.

Belongs to the LDH/MDH superfamily. LDH family. In terms of assembly, homotetramer.

It localises to the cytoplasm. It catalyses the reaction (S)-lactate + NAD(+) = pyruvate + NADH + H(+). Its pathway is fermentation; pyruvate fermentation to lactate; (S)-lactate from pyruvate: step 1/1. In terms of biological role, interconverts simultaneously and stereospecifically pyruvate and lactate with concomitant interconversion of NADH and NAD(+). This is L-lactate dehydrogenase A chain (ldha) from Lycodichthys dearborni (Antarctic eelpout).